Consider the following 221-residue polypeptide: Interleukin-12 subunit alpha (221 aa).

The signal sequence occupies residues 1–25 (MCPLRSLLLLSTLVLLHHLPHLSLG). Cystine bridges form between cysteine 39–cysteine 112, cysteine 66–cysteine 198, and cysteine 87–cysteine 125. Residues asparagine 41 and asparagine 95 are each glycosylated (N-linked (GlcNAc...) asparagine).

This sequence belongs to the IL-6 superfamily. As to quaternary structure, heterodimer with IL12B; disulfide-linked. This heterodimer is known as interleukin IL-12. Heterodimer with EBI3/IL27B; not disulfide-linked. This heterodimer is known as interleukin IL-35. Interacts with NBR1; this interaction promotes IL-12 secretion.

It localises to the secreted. Heterodimerizes with IL12B to form the IL-12 cytokine or with EBI3/IL27B to form the IL-35 cytokine. IL-12 is primarily produced by professional antigen-presenting cells (APCs) such as B-cells and dendritic cells (DCs) as well as macrophages and granulocytes and regulates T-cell and natural killer-cell responses, induces the production of interferon-gamma (IFN-gamma), favors the differentiation of T-helper 1 (Th1) cells and is an important link between innate resistance and adaptive immunity. Mechanistically, exerts its biological effects through a receptor composed of IL12R1 and IL12R2 subunits. Binding to the receptor results in the rapid tyrosine phosphorylation of a number of cellular substrates including the JAK family kinases TYK2 and JAK2. In turn, recruited STAT4 gets phosphorylated and translocates to the nucleus where it regulates cytokine/growth factor responsive genes. As part of IL-35, plays essential roles in maintaining the immune homeostasis of the liver microenvironment and also functions as an immune-suppressive cytokine. Mediates biological events through unconventional receptors composed of IL12RB2 and gp130/IL6ST heterodimers or homodimers. Signaling requires the transcription factors STAT1 and STAT4, which form a unique heterodimer that binds to distinct DNA sites. The polypeptide is Interleukin-12 subunit alpha (IL12A) (Cervus elaphus (Red deer)).